The sequence spans 300 residues: NAD kinase (300 aa).

D75 functions as the Proton acceptor in the catalytic mechanism. Residues D75–G76, N149–D150, R177, D179, T190–S195, A214, and Q248 contribute to the NAD(+) site.

Belongs to the NAD kinase family. The cofactor is a divalent metal cation.

The protein localises to the cytoplasm. The catalysed reaction is NAD(+) + ATP = ADP + NADP(+) + H(+). Its function is as follows. Involved in the regulation of the intracellular balance of NAD and NADP, and is a key enzyme in the biosynthesis of NADP. Catalyzes specifically the phosphorylation on 2'-hydroxyl of the adenosine moiety of NAD to yield NADP. The polypeptide is NAD kinase (Burkholderia vietnamiensis (strain G4 / LMG 22486) (Burkholderia cepacia (strain R1808))).